The chain runs to 548 residues: Probable malate:quinone oxidoreductase (548 aa).

The segment at 521 to 548 is disordered; that stretch reads DKPQAADSTPKPQLKPQPVQKEVADIAL. Positions 530–541 are enriched in low complexity; sequence PKPQLKPQPVQK.

Belongs to the MQO family. FAD serves as cofactor.

It catalyses the reaction (S)-malate + a quinone = a quinol + oxaloacetate. It functions in the pathway carbohydrate metabolism; tricarboxylic acid cycle; oxaloacetate from (S)-malate (quinone route): step 1/1. The polypeptide is Probable malate:quinone oxidoreductase (Shigella boydii serotype 4 (strain Sb227)).